Here is a 336-residue protein sequence, read N- to C-terminus: 4-hydroxythreonine-4-phosphate dehydrogenase (336 aa).

Residue Thr140 coordinates substrate. A divalent metal cation-binding residues include His171, His216, and His271. Residues Lys279, Asn288, and Arg297 each contribute to the substrate site.

It belongs to the PdxA family. In terms of assembly, homodimer. Zn(2+) is required as a cofactor. The cofactor is Mg(2+). Co(2+) serves as cofactor.

Its subcellular location is the cytoplasm. It carries out the reaction 4-(phosphooxy)-L-threonine + NAD(+) = 3-amino-2-oxopropyl phosphate + CO2 + NADH. It participates in cofactor biosynthesis; pyridoxine 5'-phosphate biosynthesis; pyridoxine 5'-phosphate from D-erythrose 4-phosphate: step 4/5. Functionally, catalyzes the NAD(P)-dependent oxidation of 4-(phosphooxy)-L-threonine (HTP) into 2-amino-3-oxo-4-(phosphooxy)butyric acid which spontaneously decarboxylates to form 3-amino-2-oxopropyl phosphate (AHAP). This Erythrobacter litoralis (strain HTCC2594) protein is 4-hydroxythreonine-4-phosphate dehydrogenase.